The chain runs to 778 residues: Endonuclease MutS2 (778 aa).

An ATP-binding site is contributed by 328–335 (GPNTGGKT). One can recognise a Smr domain in the interval 702 to 777 (LDLRGKRYEE…GSGATIVTFK (76 aa)).

The protein belongs to the DNA mismatch repair MutS family. MutS2 subfamily. Homodimer. Binds to stalled ribosomes, contacting rRNA.

Functionally, endonuclease that is involved in the suppression of homologous recombination and thus may have a key role in the control of bacterial genetic diversity. Acts as a ribosome collision sensor, splitting the ribosome into its 2 subunits. Detects stalled/collided 70S ribosomes which it binds and splits by an ATP-hydrolysis driven conformational change. Acts upstream of the ribosome quality control system (RQC), a ribosome-associated complex that mediates the extraction of incompletely synthesized nascent chains from stalled ribosomes and their subsequent degradation. Probably generates substrates for RQC. The polypeptide is Endonuclease MutS2 (Streptococcus pneumoniae (strain 70585)).